The primary structure comprises 109 residues: Large ribosomal subunit protein uL22 (109 aa).

This sequence belongs to the universal ribosomal protein uL22 family. As to quaternary structure, part of the 50S ribosomal subunit.

Its function is as follows. This protein binds specifically to 23S rRNA; its binding is stimulated by other ribosomal proteins, e.g. L4, L17, and L20. It is important during the early stages of 50S assembly. It makes multiple contacts with different domains of the 23S rRNA in the assembled 50S subunit and ribosome. The globular domain of the protein is located near the polypeptide exit tunnel on the outside of the subunit, while an extended beta-hairpin is found that lines the wall of the exit tunnel in the center of the 70S ribosome. In Polaromonas sp. (strain JS666 / ATCC BAA-500), this protein is Large ribosomal subunit protein uL22.